We begin with the raw amino-acid sequence, 137 residues long: Large ribosomal subunit protein uL13 (137 aa).

Belongs to the universal ribosomal protein uL13 family. In terms of assembly, part of the 50S ribosomal subunit.

Its function is as follows. This protein is one of the early assembly proteins of the 50S ribosomal subunit, although it is not seen to bind rRNA by itself. It is important during the early stages of 50S assembly. The chain is Large ribosomal subunit protein uL13 from Methanocaldococcus jannaschii (strain ATCC 43067 / DSM 2661 / JAL-1 / JCM 10045 / NBRC 100440) (Methanococcus jannaschii).